Consider the following 337-residue polypeptide: MRAVLLPGSGEQPAAFCYQVNGSCPRTVHPLAIRVLIYLACAVGMLITVLGNLFVVFAVSYFKVLHTPTNFLLLSLALADMLLGLLVLPLSTVRSVESCWFFGDFLCRLHTYLDTLFCLTSIFHLCFISIDRHCAICDPLLYPSKFTVRIALRYIAAGWGIPAAYTAFFLYTDVVERALSQWLEEMPCVGSCQLLFNKFWGWLNFPAFFIPCLIMISLYLKIFVVATRQAQQIRTLSQSLSGAVKRERKAAKTLGIAVGIYLVCWLPFTVDTLVDSLLNFVTPPLVFDIFIWFAYFNSACNPIIYVFSYRWFRKALKLLLSREILSPRTQTADLFHD.

Over Met1–Tyr38 the chain is Extracellular. Asn21 is a glycosylation site (N-linked (GlcNAc...) asparagine). Intrachain disulfides connect Cys24–Cys188 and Cys99–Cys192. Residues Leu39–Val59 form a helical membrane-spanning segment. At Ser60–Asn70 the chain is on the cytoplasmic side. A helical membrane pass occupies residues Phe71 to Ser91. The Extracellular portion of the chain corresponds to Thr92–Leu109. A helical transmembrane segment spans residues His110–Ile130. Topologically, residues Asp131–Tyr154 are cytoplasmic. Residues Ile155 to Val175 traverse the membrane as a helical segment. An extracellular Loop 2 (ECL2) region spans residues Glu176 to Val189. Over Glu176–Asn204 the chain is Extracellular. Residues Phe205–Val225 form a helical membrane-spanning segment. The Cytoplasmic portion of the chain corresponds to Ala226–Thr253. The helical transmembrane segment at Leu254–Val274 threads the bilayer. Residues Asp275–Pro284 lie on the Extracellular side of the membrane. A helical membrane pass occupies residues Leu285–Phe307. The Cytoplasmic segment spans residues Ser308–Asp337.

Belongs to the G-protein coupled receptor 1 family.

Its subcellular location is the cell membrane. Functionally, olfactory receptor specific for trimethylamine, a trace amine enriched in the urine of male rats, playing a role in social behavior. Also activated by N-methylpiperidine. Trimethylamine is present at high concentration in the urine of male after puberty and acts as an attractant. Trimethylamine-binding causes a conformation change that triggers signaling via G(s)-class of G alpha proteins (GNAL or GNAS). Also required to provide olfactory input into limbic brain areas to regulate emotional behaviors likely via modulation of the serotonin system. This chain is Trace amine-associated receptor 5, found in Rattus norvegicus (Rat).